A 222-amino-acid polypeptide reads, in one-letter code: Phosphoribosylformylglycinamidine synthase subunit PurQ (222 aa).

A Glutamine amidotransferase type-1 domain is found at 2 to 222 (KAAVITFPGS…RALLGGMALV (221 aa)). Catalysis depends on Cys-86, which acts as the Nucleophile. Catalysis depends on residues His-194 and Glu-196.

Part of the FGAM synthase complex composed of 1 PurL, 1 PurQ and 2 PurS subunits.

The protein localises to the cytoplasm. The catalysed reaction is N(2)-formyl-N(1)-(5-phospho-beta-D-ribosyl)glycinamide + L-glutamine + ATP + H2O = 2-formamido-N(1)-(5-O-phospho-beta-D-ribosyl)acetamidine + L-glutamate + ADP + phosphate + H(+). The enzyme catalyses L-glutamine + H2O = L-glutamate + NH4(+). It functions in the pathway purine metabolism; IMP biosynthesis via de novo pathway; 5-amino-1-(5-phospho-D-ribosyl)imidazole from N(2)-formyl-N(1)-(5-phospho-D-ribosyl)glycinamide: step 1/2. Its function is as follows. Part of the phosphoribosylformylglycinamidine synthase complex involved in the purines biosynthetic pathway. Catalyzes the ATP-dependent conversion of formylglycinamide ribonucleotide (FGAR) and glutamine to yield formylglycinamidine ribonucleotide (FGAM) and glutamate. The FGAM synthase complex is composed of three subunits. PurQ produces an ammonia molecule by converting glutamine to glutamate. PurL transfers the ammonia molecule to FGAR to form FGAM in an ATP-dependent manner. PurS interacts with PurQ and PurL and is thought to assist in the transfer of the ammonia molecule from PurQ to PurL. The protein is Phosphoribosylformylglycinamidine synthase subunit PurQ of Cereibacter sphaeroides (strain ATCC 17023 / DSM 158 / JCM 6121 / CCUG 31486 / LMG 2827 / NBRC 12203 / NCIMB 8253 / ATH 2.4.1.) (Rhodobacter sphaeroides).